The primary structure comprises 669 residues: DNA ligase (669 aa).

NAD(+)-binding positions include 34–38 (DAEYD), 83–84 (SL), and glutamate 114. The N6-AMP-lysine intermediate role is filled by lysine 116. Arginine 137, glutamate 171, lysine 287, and lysine 311 together coordinate NAD(+). Residues cysteine 405, cysteine 408, cysteine 423, and cysteine 428 each coordinate Zn(2+). A BRCT domain is found at 591–669 (NVESYFAGKT…EERFLQELNK (79 aa)).

It belongs to the NAD-dependent DNA ligase family. LigA subfamily. Requires Mg(2+) as cofactor. Mn(2+) is required as a cofactor.

It carries out the reaction NAD(+) + (deoxyribonucleotide)n-3'-hydroxyl + 5'-phospho-(deoxyribonucleotide)m = (deoxyribonucleotide)n+m + AMP + beta-nicotinamide D-nucleotide.. DNA ligase that catalyzes the formation of phosphodiester linkages between 5'-phosphoryl and 3'-hydroxyl groups in double-stranded DNA using NAD as a coenzyme and as the energy source for the reaction. It is essential for DNA replication and repair of damaged DNA. The sequence is that of DNA ligase from Bacillus cereus (strain B4264).